An 81-amino-acid polypeptide reads, in one-letter code: Photosystem I iron-sulfur center (81 aa).

4Fe-4S ferredoxin-type domains lie at 2–31 (SHTV…MVPW) and 37–68 (GQIA…VRVY). Positions 11, 14, 17, 21, 48, 51, 54, and 58 each coordinate [4Fe-4S] cluster.

The eukaryotic PSI reaction center is composed of at least 11 subunits. [4Fe-4S] cluster serves as cofactor.

The protein resides in the plastid. It localises to the chloroplast thylakoid membrane. It carries out the reaction reduced [plastocyanin] + hnu + oxidized [2Fe-2S]-[ferredoxin] = oxidized [plastocyanin] + reduced [2Fe-2S]-[ferredoxin]. Apoprotein for the two 4Fe-4S centers FA and FB of photosystem I (PSI); essential for photochemical activity. FB is the terminal electron acceptor of PSI, donating electrons to ferredoxin. The C-terminus interacts with PsaA/B/D and helps assemble the protein into the PSI complex. Required for binding of PsaD and PsaE to PSI. PSI is a plastocyanin/cytochrome c6-ferredoxin oxidoreductase, converting photonic excitation into a charge separation, which transfers an electron from the donor P700 chlorophyll pair to the spectroscopically characterized acceptors A0, A1, FX, FA and FB in turn. The protein is Photosystem I iron-sulfur center of Thalassiosira pseudonana (Marine diatom).